The primary structure comprises 721 residues: uncharacterized protein (721 aa).

The chain crosses the membrane as a helical span at residues 6-26 (QLIFVNFYVILIIWWFVMGIL). 308-315 (GGTGSGKT) provides a ligand contact to ATP.

Belongs to the GSP E family. In terms of processing, this protein undergoes a protein self splicing that involves a post-translational excision of the intervening region (intein) followed by peptide ligation.

The protein resides in the membrane. This is an uncharacterized protein from Methanocaldococcus jannaschii (strain ATCC 43067 / DSM 2661 / JAL-1 / JCM 10045 / NBRC 100440) (Methanococcus jannaschii).